We begin with the raw amino-acid sequence, 999 residues long: MKYATGTDNAMTSGISGQTNNSNSASNEMQPTTSTPTAAHKEATSTATTTATYANGNPNSNANPSQSQPSNALFCEQVTTVTNLFEKWNDCERTVVMYALLKRLRYPSLKFLQYSIDSNLTQNLGTSQTNLSSVVIDINANNPVYLQNLLNAYKTFQPCDLLDAMSSSSSDKDSMPCYGSDFQITTSAQCDERKLYARKEDILHEVLNMLPLLKPGNEEAKLIYLTLIPVAVKDTMQQIVPTELVQQIFSYLLIHPAITSEDRRSLNIWLRHLEDHIQAAAAGLTNRSYFLQPSPQLVAGGSSTGSGSCSSSATSSSTASCSSVASSSLCPASGSRSSRTNDWQTIAPPSKQLQNKLAGDWRGNGGGSSSGSINPLCDNLNGITLNELASSQNSLGLSLEGSSSLVNGVVAGAGSMLGIAGGDDHDTSFSKNGTEILDFDPVTADMGEACSLASSSLCGRNGGNPVEDRSQPPPNLQQQLLQPPPYASILMGNVGDQFGEINRWSLDSKIAALKTRRSNSLTTQTISSCSSSSNSSVITVNDNCSNSTENLAQFANKPRSFSLSIEHQRGALMNSGSDTRLDEFKPNYIKFHTRNVGMSGIGLWLKSLRLHKYIELFKNMTYEEMLLITEDFLQSVGVTKGASHKLALCIDKLKERANILNRVEQELLSGQMELSTAVEELTNIVLTPMKPLESPGPPEENIGLRFLKVIDIVTNTLQQDPYAVQDDETLGVLMWILDRSIHNEAFMNHASQLKDLKFKLSKMKISMVPKMHHVKPAGVGPNNGNINKPRWNGKTRKCDTKNGSNDRINNRKNSNDMLNFSLNCLPHPLPHHSQQAPPPLPQFDYNGYGGGPSHQPQYKSSSYPSFMGNPQQQPPPPPSSKSHHHPQQMQQMLQQHNHFPALPQQTPPQSHRRSLNNLILVAGGPQQPQQLIFKPGQGVLTNNGSNDNLVLERNQQSQQQQQQRKLSGGVSSAEQQPKKTMAAVVMENLAKFDQHFTLF.

Positions 1–36 (MKYATGTDNAMTSGISGQTNNSNSASNEMQPTTSTP) are enriched in polar residues. 2 disordered regions span residues 1 to 69 (MKYA…QSQP) and 329 to 349 (LCPA…IAPP). Composition is skewed to low complexity over residues 44 to 69 (TSTA…QSQP) and 329 to 338 (LCPASGSRSS). Phosphoserine is present on residues Ser-564 and Ser-575. Residues 583 to 763 (EFKPNYIKFH…KDLKFKLSKM (181 aa)) are interaction with cup. An SAM domain is found at 600–654 (GIGLWLKSLRLHKYIELFKNMTYEEMLLITEDFLQSVGVTKGASHKLALCIDKLK). Disordered regions lie at residues 773-892 (HVKP…MQQM) and 955-977 (QQSQ…EQQP). Polar residues-rich tracts occupy residues 801–822 (KNGS…NFSL) and 854–864 (HQPQYKSSSYP). At Ser-972 the chain carries Phosphoserine.

This sequence belongs to the SMAUG family. In terms of assembly, interacts with oskar (osk). Binds to the 3'-UTR of nanos (nos). Interacts with cup, which in turn recruits eIF4-E, leading to an indirect interaction between smg and eIF4-E that prevents mRNA translation. Forms a complex with aub, twin, AGO3, nanos mRNA and piRNAs that targets the nanos 3'-untranslated region, in early embryos. In terms of tissue distribution, at syncytial blastoderm, it is located throughout the bulk cytoplasm and pole plasm. By the time of cellularization, it concentrates at the posterior pole.

It is found in the cytoplasm. Translation regulator that binds to the 3'-UTR of specific mRNAs such as nanos (nos) and prevents their translation. Prevents translation of unlocalized nanos in the bulk cytoplasm via the recruitment of cup. This is Protein Smaug (smg) from Drosophila melanogaster (Fruit fly).